The primary structure comprises 1345 residues: DNA-directed RNA polymerase subunit beta' (1345 aa).

4 residues coordinate Zn(2+): Cys-60, Cys-62, Cys-75, and Cys-78. Residues Asp-536, Asp-538, and Asp-540 each contribute to the Mg(2+) site. Zn(2+) is bound by residues Cys-895, Cys-974, Cys-981, and Cys-984.

The protein belongs to the RNA polymerase beta' chain family. In terms of assembly, the RNAP catalytic core consists of 2 alpha, 1 beta, 1 beta' and 1 omega subunit. When a sigma factor is associated with the core the holoenzyme is formed, which can initiate transcription. It depends on Mg(2+) as a cofactor. Zn(2+) is required as a cofactor.

It catalyses the reaction RNA(n) + a ribonucleoside 5'-triphosphate = RNA(n+1) + diphosphate. Its function is as follows. DNA-dependent RNA polymerase catalyzes the transcription of DNA into RNA using the four ribonucleoside triphosphates as substrates. This Bifidobacterium longum (strain DJO10A) protein is DNA-directed RNA polymerase subunit beta'.